A 306-amino-acid polypeptide reads, in one-letter code: Probable rRNA-processing protein EBP2 (306 aa).

Met1 bears the N-acetylmethionine mark. Disordered stretches follow at residues 1-20 (MDTP…LVTD) and 77-99 (VPEI…VDPE). Residue Thr3 is modified to Phosphothreonine. A phosphoserine mark is found at Ser7, Ser9, Ser11, Ser13, and Ser16. A Glycyl lysine isopeptide (Lys-Gly) (interchain with G-Cter in SUMO2) cross-link involves residue Lys94. Positions 138–169 (AEMAKSDLQMQKIRQKLQTKQAAMERSEKAKQ) form a coiled coil. Residues Lys179 and Lys218 each participate in a glycyl lysine isopeptide (Lys-Gly) (interchain with G-Cter in SUMO2) cross-link. The disordered stretch occupies residues 213-306 (LEGDQKPLAQ…TREKMKNRTH (94 aa)). Phosphoserine occurs at positions 264 and 270. Over residues 274–306 (KTAHGRGLKRPGKKGSNKRPGKRTREKMKNRTH) the composition is skewed to basic residues.

It belongs to the EBP2 family. Specifically interacts with EBV EBNA1. The EBNA1-EBP2 interaction is important for the stable segregation of EBV episomes during cell division. Interacts with WDR46. As to expression, ubiquitous.

The protein localises to the nucleus. It is found in the nucleolus. Functionally, required for the processing of the 27S pre-rRNA. The polypeptide is Probable rRNA-processing protein EBP2 (EBNA1BP2) (Homo sapiens (Human)).